The chain runs to 421 residues: Histidine--tRNA ligase (421 aa).

The protein belongs to the class-II aminoacyl-tRNA synthetase family.

Its subcellular location is the cytoplasm. It catalyses the reaction tRNA(His) + L-histidine + ATP = L-histidyl-tRNA(His) + AMP + diphosphate + H(+). In Pyrobaculum calidifontis (strain DSM 21063 / JCM 11548 / VA1), this protein is Histidine--tRNA ligase.